The sequence spans 329 residues: Acetyl-coenzyme A carboxylase carboxyl transferase subunit alpha (329 aa).

The 255-residue stretch at Gln-40–Glu-294 folds into the CoA carboxyltransferase C-terminal domain.

It belongs to the AccA family. As to quaternary structure, acetyl-CoA carboxylase is a heterohexamer composed of biotin carboxyl carrier protein (AccB), biotin carboxylase (AccC) and two subunits each of ACCase subunit alpha (AccA) and ACCase subunit beta (AccD).

The protein localises to the cytoplasm. The catalysed reaction is N(6)-carboxybiotinyl-L-lysyl-[protein] + acetyl-CoA = N(6)-biotinyl-L-lysyl-[protein] + malonyl-CoA. It participates in lipid metabolism; malonyl-CoA biosynthesis; malonyl-CoA from acetyl-CoA: step 1/1. In terms of biological role, component of the acetyl coenzyme A carboxylase (ACC) complex. First, biotin carboxylase catalyzes the carboxylation of biotin on its carrier protein (BCCP) and then the CO(2) group is transferred by the carboxyltransferase to acetyl-CoA to form malonyl-CoA. This chain is Acetyl-coenzyme A carboxylase carboxyl transferase subunit alpha, found in Prochlorococcus marinus (strain NATL1A).